Reading from the N-terminus, the 265-residue chain is Phosphate import ATP-binding protein PstB (265 aa).

The ABC transporter domain maps to 11–260 (VSADEVKIAA…PRDPRTESYI (250 aa)). An ATP-binding site is contributed by 50 to 57 (GPSGCGKS).

The protein belongs to the ABC transporter superfamily. Phosphate importer (TC 3.A.1.7) family. As to quaternary structure, the complex is composed of two ATP-binding proteins (PstB), two transmembrane proteins (PstC and PstA) and a solute-binding protein (PstS).

It localises to the cell inner membrane. It carries out the reaction phosphate(out) + ATP + H2O = ADP + 2 phosphate(in) + H(+). In terms of biological role, part of the ABC transporter complex PstSACB involved in phosphate import. Responsible for energy coupling to the transport system. The chain is Phosphate import ATP-binding protein PstB from Cereibacter sphaeroides (strain ATCC 17023 / DSM 158 / JCM 6121 / CCUG 31486 / LMG 2827 / NBRC 12203 / NCIMB 8253 / ATH 2.4.1.) (Rhodobacter sphaeroides).